The sequence spans 490 residues: Protein nucleotidyltransferase YdiU (490 aa).

ATP-binding residues include Gly94, Gly96, Arg97, Lys117, Asp129, Gly130, Arg180, and Arg187. Residue Asp256 is the Proton acceptor of the active site. Positions 257 and 266 each coordinate Mg(2+). Asp266 provides a ligand contact to ATP.

The protein belongs to the SELO family. Mg(2+) serves as cofactor. Requires Mn(2+) as cofactor.

The catalysed reaction is L-seryl-[protein] + ATP = 3-O-(5'-adenylyl)-L-seryl-[protein] + diphosphate. The enzyme catalyses L-threonyl-[protein] + ATP = 3-O-(5'-adenylyl)-L-threonyl-[protein] + diphosphate. It carries out the reaction L-tyrosyl-[protein] + ATP = O-(5'-adenylyl)-L-tyrosyl-[protein] + diphosphate. It catalyses the reaction L-histidyl-[protein] + UTP = N(tele)-(5'-uridylyl)-L-histidyl-[protein] + diphosphate. The catalysed reaction is L-seryl-[protein] + UTP = O-(5'-uridylyl)-L-seryl-[protein] + diphosphate. The enzyme catalyses L-tyrosyl-[protein] + UTP = O-(5'-uridylyl)-L-tyrosyl-[protein] + diphosphate. Functionally, nucleotidyltransferase involved in the post-translational modification of proteins. It can catalyze the addition of adenosine monophosphate (AMP) or uridine monophosphate (UMP) to a protein, resulting in modifications known as AMPylation and UMPylation. This Clostridium perfringens (strain 13 / Type A) protein is Protein nucleotidyltransferase YdiU.